Reading from the N-terminus, the 506-residue chain is Histidine ammonia-lyase (506 aa).

The segment at residues 143–145 is a cross-link (5-imidazolinone (Ala-Gly)); sequence ASG. S144 carries the 2,3-didehydroalanine (Ser) modification.

This sequence belongs to the PAL/histidase family. Contains an active site 4-methylidene-imidazol-5-one (MIO), which is formed autocatalytically by cyclization and dehydration of residues Ala-Ser-Gly.

The protein localises to the cytoplasm. It carries out the reaction L-histidine = trans-urocanate + NH4(+). The protein operates within amino-acid degradation; L-histidine degradation into L-glutamate; N-formimidoyl-L-glutamate from L-histidine: step 1/3. The chain is Histidine ammonia-lyase from Salmonella paratyphi C (strain RKS4594).